The sequence spans 359 residues: Histidinol-phosphate aminotransferase (359 aa).

Lys-212 carries the N6-(pyridoxal phosphate)lysine modification.

This sequence belongs to the class-II pyridoxal-phosphate-dependent aminotransferase family. Histidinol-phosphate aminotransferase subfamily. Homodimer. The cofactor is pyridoxal 5'-phosphate.

The catalysed reaction is L-histidinol phosphate + 2-oxoglutarate = 3-(imidazol-4-yl)-2-oxopropyl phosphate + L-glutamate. The protein operates within amino-acid biosynthesis; L-histidine biosynthesis; L-histidine from 5-phospho-alpha-D-ribose 1-diphosphate: step 7/9. In Buchnera aphidicola subsp. Melaphis rhois, this protein is Histidinol-phosphate aminotransferase.